Here is a 279-residue protein sequence, read N- to C-terminus: Urease accessory protein UreD (279 aa).

This sequence belongs to the UreD family. As to quaternary structure, ureD, UreF and UreG form a complex that acts as a GTP-hydrolysis-dependent molecular chaperone, activating the urease apoprotein by helping to assemble the nickel containing metallocenter of UreC. The UreE protein probably delivers the nickel.

The protein resides in the cytoplasm. Functionally, required for maturation of urease via the functional incorporation of the urease nickel metallocenter. This Streptococcus thermophilus (strain CNRZ 1066) protein is Urease accessory protein UreD.